The following is a 418-amino-acid chain: Zinc metalloproteinase nas-8 (418 aa).

Residues 1–28 form the signal peptide; sequence MMNRASLCRIAVLLCILHLSHLIDSTYA. A propeptide spanning residues 29–100 is cleaved from the precursor; that stretch reads QSYLTEKDFL…TSKLKSGVRR (72 aa). Residues 101–296 enclose the Peptidase M12A domain; that stretch reads NGVTSVIKRW…LKINKLYNCP (196 aa). Intrachain disulfides connect Cys-143–Cys-295, Cys-165–Cys-184, Cys-347–Cys-381, Cys-354–Cys-374, and Cys-361–Cys-378. His-192 contacts Zn(2+). Residue Glu-193 is part of the active site. Positions 196 and 202 each coordinate Zn(2+). Positions 347-381 constitute a ShKT domain; it reads CSDRTNLCWRWLDRCRSYFFEKIMKEFCALSCGYC.

The cofactor is Zn(2+).

The protein localises to the secreted. It carries out the reaction Hydrolysis of peptide bonds in substrates containing five or more amino acids, preferentially with Ala in P1', and Pro in P2'.. Its activity is regulated as follows. Inhibited by ethylene glycol-bis(2-aminoethylether)-N,N,N,N-tetraacetic acid (EGTA), ethylenediaminetetraacetic acid (EDTA) and o-phenanthroline. In terms of biological role, metalloprotease. The polypeptide is Zinc metalloproteinase nas-8 (Steinernema carpocapsae (Entomopathogenic nematode)).